Reading from the N-terminus, the 409-residue chain is Argininosuccinate synthase (409 aa).

ATP-binding positions include 16–24 (AYSGGLDTS) and alanine 44. 2 residues coordinate L-citrulline: tyrosine 96 and serine 101. Position 126 (glycine 126) interacts with ATP. L-aspartate is bound by residues threonine 128, asparagine 132, and aspartate 133. Asparagine 132 serves as a coordination point for L-citrulline. Residues arginine 136, serine 185, serine 194, glutamate 270, and tyrosine 282 each coordinate L-citrulline.

Belongs to the argininosuccinate synthase family. Type 1 subfamily. As to quaternary structure, homotetramer.

It is found in the cytoplasm. The enzyme catalyses L-citrulline + L-aspartate + ATP = 2-(N(omega)-L-arginino)succinate + AMP + diphosphate + H(+). It participates in amino-acid biosynthesis; L-arginine biosynthesis; L-arginine from L-ornithine and carbamoyl phosphate: step 2/3. The chain is Argininosuccinate synthase from Shewanella piezotolerans (strain WP3 / JCM 13877).